The sequence spans 175 residues: Endoribonuclease YbeY (175 aa).

3 residues coordinate Zn(2+): His-121, His-125, and His-131. The interval 154–175 is disordered; that stretch reads PDPYSPAQQESQAQPENTELNP. Positions 159 to 175 are enriched in polar residues; the sequence is PAQQESQAQPENTELNP.

Belongs to the endoribonuclease YbeY family. The cofactor is Zn(2+).

The protein localises to the cytoplasm. Single strand-specific metallo-endoribonuclease involved in late-stage 70S ribosome quality control and in maturation of the 3' terminus of the 16S rRNA. The protein is Endoribonuclease YbeY of Alcanivorax borkumensis (strain ATCC 700651 / DSM 11573 / NCIMB 13689 / SK2).